A 147-amino-acid chain; its full sequence is Large ribosomal subunit protein uL16 (147 aa).

The protein belongs to the universal ribosomal protein uL16 family. As to quaternary structure, part of the 50S ribosomal subunit.

Its function is as follows. Binds 23S rRNA and is also seen to make contacts with the A and possibly P site tRNAs. This is Large ribosomal subunit protein uL16 from Clostridium acetobutylicum (strain ATCC 824 / DSM 792 / JCM 1419 / IAM 19013 / LMG 5710 / NBRC 13948 / NRRL B-527 / VKM B-1787 / 2291 / W).